Consider the following 451-residue polypeptide: UDP-N-acetylmuramoylalanine--D-glutamate ligase (451 aa).

Position 120–126 (120–126 (GSNGKTT)) interacts with ATP.

Belongs to the MurCDEF family.

It is found in the cytoplasm. The catalysed reaction is UDP-N-acetyl-alpha-D-muramoyl-L-alanine + D-glutamate + ATP = UDP-N-acetyl-alpha-D-muramoyl-L-alanyl-D-glutamate + ADP + phosphate + H(+). It participates in cell wall biogenesis; peptidoglycan biosynthesis. Functionally, cell wall formation. Catalyzes the addition of glutamate to the nucleotide precursor UDP-N-acetylmuramoyl-L-alanine (UMA). This is UDP-N-acetylmuramoylalanine--D-glutamate ligase from Bacillus velezensis (strain DSM 23117 / BGSC 10A6 / LMG 26770 / FZB42) (Bacillus amyloliquefaciens subsp. plantarum).